Here is a 417-residue protein sequence, read N- to C-terminus: Gamma-glutamyl phosphate reductase (417 aa).

Belongs to the gamma-glutamyl phosphate reductase family.

It localises to the cytoplasm. It catalyses the reaction L-glutamate 5-semialdehyde + phosphate + NADP(+) = L-glutamyl 5-phosphate + NADPH + H(+). The protein operates within amino-acid biosynthesis; L-proline biosynthesis; L-glutamate 5-semialdehyde from L-glutamate: step 2/2. In terms of biological role, catalyzes the NADPH-dependent reduction of L-glutamate 5-phosphate into L-glutamate 5-semialdehyde and phosphate. The product spontaneously undergoes cyclization to form 1-pyrroline-5-carboxylate. This Bacteroides thetaiotaomicron (strain ATCC 29148 / DSM 2079 / JCM 5827 / CCUG 10774 / NCTC 10582 / VPI-5482 / E50) protein is Gamma-glutamyl phosphate reductase.